Consider the following 449-residue polypeptide: UDP-N-acetylmuramoylalanine--D-glutamate ligase (449 aa).

Residue 118 to 124 (GSNGKTT) coordinates ATP.

Belongs to the MurCDEF family.

Its subcellular location is the cytoplasm. The enzyme catalyses UDP-N-acetyl-alpha-D-muramoyl-L-alanine + D-glutamate + ATP = UDP-N-acetyl-alpha-D-muramoyl-L-alanyl-D-glutamate + ADP + phosphate + H(+). The protein operates within cell wall biogenesis; peptidoglycan biosynthesis. In terms of biological role, cell wall formation. Catalyzes the addition of glutamate to the nucleotide precursor UDP-N-acetylmuramoyl-L-alanine (UMA). The sequence is that of UDP-N-acetylmuramoylalanine--D-glutamate ligase from Leuconostoc mesenteroides subsp. mesenteroides (strain ATCC 8293 / DSM 20343 / BCRC 11652 / CCM 1803 / JCM 6124 / NCDO 523 / NBRC 100496 / NCIMB 8023 / NCTC 12954 / NRRL B-1118 / 37Y).